Here is a 217-residue protein sequence, read N- to C-terminus: Thiopurine S-methyltransferase (217 aa).

S-adenosyl-L-methionine contacts are provided by W10, L45, E66, and R123.

The protein belongs to the class I-like SAM-binding methyltransferase superfamily. TPMT family.

It localises to the cytoplasm. It carries out the reaction S-adenosyl-L-methionine + a thiopurine = S-adenosyl-L-homocysteine + a thiopurine S-methylether.. The protein is Thiopurine S-methyltransferase of Pseudomonas fluorescens (strain Pf0-1).